The primary structure comprises 566 residues: Proline--tRNA ligase (566 aa).

This sequence belongs to the class-II aminoacyl-tRNA synthetase family. ProS type 1 subfamily. Homodimer.

The protein localises to the cytoplasm. It catalyses the reaction tRNA(Pro) + L-proline + ATP = L-prolyl-tRNA(Pro) + AMP + diphosphate. Functionally, catalyzes the attachment of proline to tRNA(Pro) in a two-step reaction: proline is first activated by ATP to form Pro-AMP and then transferred to the acceptor end of tRNA(Pro). As ProRS can inadvertently accommodate and process non-cognate amino acids such as alanine and cysteine, to avoid such errors it has two additional distinct editing activities against alanine. One activity is designated as 'pretransfer' editing and involves the tRNA(Pro)-independent hydrolysis of activated Ala-AMP. The other activity is designated 'posttransfer' editing and involves deacylation of mischarged Ala-tRNA(Pro). The misacylated Cys-tRNA(Pro) is not edited by ProRS. The protein is Proline--tRNA ligase of Exiguobacterium sibiricum (strain DSM 17290 / CCUG 55495 / CIP 109462 / JCM 13490 / 255-15).